The sequence spans 124 residues: UPF0292 protein AF_0905 (124 aa).

The Toprim domain occupies 21 to 98 (GWVVVVEGKK…IPDVEIKRKI (78 aa)). Residues Glu-27, Asp-67, and Asp-69 each coordinate Mg(2+).

This sequence belongs to the UPF0292 family. The cofactor is Mg(2+).

The sequence is that of UPF0292 protein AF_0905 from Archaeoglobus fulgidus (strain ATCC 49558 / DSM 4304 / JCM 9628 / NBRC 100126 / VC-16).